The primary structure comprises 219 residues: Cytidylate kinase (219 aa).

Position 21–29 (21–29) interacts with ATP; that stretch reads GPAASGKGT.

This sequence belongs to the cytidylate kinase family. Type 1 subfamily.

It is found in the cytoplasm. It catalyses the reaction CMP + ATP = CDP + ADP. The catalysed reaction is dCMP + ATP = dCDP + ADP. The polypeptide is Cytidylate kinase (Rickettsia conorii (strain ATCC VR-613 / Malish 7)).